We begin with the raw amino-acid sequence, 208 residues long: MENTEKLKNSKEVIAYIAECFPNCFTLEGEAKPLKIGIFQDLADRLNDDPKVSKTQLRAALRQYTSSWRYLHGVKPGATRVDLDGNPCGELEEQHVEHAQAALAESKARVEARRKEQVKKVREEAKANKPKAKKPQQARRPQNAPKVEKKPVETRALAASELNVGNQVNVNMGKGNMAATIVEVNKEDVRVQLANGLQMVVKAEHLRA.

Residues 107–127 (KARVEARRKEQVKKVREEAKA) show a composition bias toward basic and acidic residues. Residues 107-152 (KARVEARRKEQVKKVREEAKANKPKAKKPQQARRPQNAPKVEKKPV) are disordered. A compositionally biased stretch (basic residues) spans 128 to 137 (NKPKAKKPQQ).

It belongs to the ProQ family.

It localises to the cytoplasm. Functionally, RNA chaperone with significant RNA binding, RNA strand exchange and RNA duplexing activities. The polypeptide is RNA chaperone ProQ (Vibrio cholerae serotype O1 (strain ATCC 39541 / Classical Ogawa 395 / O395)).